The following is a 274-amino-acid chain: Serine/threonine-protein kinase 1 (274 aa).

A Protein kinase domain is found at 17–265; the sequence is ARTALHLVNG…YEVIQKNTYW (249 aa). Residues 23 to 31 and lysine 46 each bind ATP; that span reads LVNGKFGKV. Aspartate 133 (proton acceptor) is an active-site residue.

Belongs to the protein kinase superfamily. Ser/Thr protein kinase family.

It carries out the reaction L-seryl-[protein] + ATP = O-phospho-L-seryl-[protein] + ADP + H(+). It catalyses the reaction L-threonyl-[protein] + ATP = O-phospho-L-threonyl-[protein] + ADP + H(+). In terms of biological role, in vitro, can phosphorylate histone H1. The protein is Serine/threonine-protein kinase 1 (PK1) of Lymantria dispar multicapsid nuclear polyhedrosis virus (LdMNPV).